A 331-amino-acid polypeptide reads, in one-letter code: Probable 5-dehydro-4-deoxyglucarate dehydratase 2 (331 aa).

The tract at residues 1–23 (MSADTDTDTDTGTGTGPDTDTGT) is disordered. The segment covering 10–23 (DTGTGTGPDTDTGT) has biased composition (low complexity).

This sequence belongs to the DapA family.

The catalysed reaction is 5-dehydro-4-deoxy-D-glucarate + H(+) = 2,5-dioxopentanoate + CO2 + H2O. The protein operates within carbohydrate acid metabolism; D-glucarate degradation; 2,5-dioxopentanoate from D-glucarate: step 2/2. This chain is Probable 5-dehydro-4-deoxyglucarate dehydratase 2, found in Streptomyces avermitilis (strain ATCC 31267 / DSM 46492 / JCM 5070 / NBRC 14893 / NCIMB 12804 / NRRL 8165 / MA-4680).